Reading from the N-terminus, the 289-residue chain is MSFSLQLTRLKARLYFPQYHLPPFLGNKFRGGFGSVLLKAVCSYLKPSCNICKSVDDCLYHALYTRDRQKRGRSQPVRPIVFIPPFFGRSVSGRGELTLYINVFGDYVKYLPHIIYGLRYLGKMGLNATSKYEIVSISDAISGKEVYDGETVFVENLSSIELGKIKPREVEKEIEVDYLTPMEAKTPINLPFLIHIVRRRLILFVNEYGSGEVPEFYCEAETLESSWEKHELHHRSKRQGLRSFFGVTGRARYSISEIDDNALTLLSIGELIGGGAKASFGMGFFRIRS.

This is an uncharacterized protein from Archaeoglobus fulgidus (strain ATCC 49558 / DSM 4304 / JCM 9628 / NBRC 100126 / VC-16).